A 317-amino-acid chain; its full sequence is Acetyl-coenzyme A carboxylase carboxyl transferase subunit alpha (317 aa).

A CoA carboxyltransferase C-terminal domain is found at 40–293; sequence LEVRVREAIV…GDVIANALGE (254 aa).

This sequence belongs to the AccA family. In terms of assembly, acetyl-CoA carboxylase is a heterohexamer composed of biotin carboxyl carrier protein (AccB), biotin carboxylase (AccC) and two subunits each of ACCase subunit alpha (AccA) and ACCase subunit beta (AccD).

Its subcellular location is the cytoplasm. It carries out the reaction N(6)-carboxybiotinyl-L-lysyl-[protein] + acetyl-CoA = N(6)-biotinyl-L-lysyl-[protein] + malonyl-CoA. It participates in lipid metabolism; malonyl-CoA biosynthesis; malonyl-CoA from acetyl-CoA: step 1/1. Functionally, component of the acetyl coenzyme A carboxylase (ACC) complex. First, biotin carboxylase catalyzes the carboxylation of biotin on its carrier protein (BCCP) and then the CO(2) group is transferred by the carboxyltransferase to acetyl-CoA to form malonyl-CoA. The polypeptide is Acetyl-coenzyme A carboxylase carboxyl transferase subunit alpha (Rhizobium etli (strain ATCC 51251 / DSM 11541 / JCM 21823 / NBRC 15573 / CFN 42)).